Here is a 110-residue protein sequence, read N- to C-terminus: Methionine-R-sulfoxide reductase B1-A (110 aa).

The 104-residue stretch at 1–104 folds into the MsrB domain; the sequence is MSFCSFSGGE…FSSSLKFIPK (104 aa). Zn(2+) contacts are provided by Cys23, Cys26, Cys69, and Cys72. Sec93 serves as the catalytic Nucleophile. Sec93 is a non-standard amino acid (selenocysteine).

Belongs to the MsrB Met sulfoxide reductase family. Requires Zn(2+) as cofactor. In the embryo, expressed in the polster, paraxial mesoderm, tectum, otic vesicle and liver.

The protein localises to the cytoplasm. The protein resides in the nucleus. It is found in the cytoskeleton. The catalysed reaction is L-methionyl-[protein] + [thioredoxin]-disulfide + H2O = L-methionyl-(R)-S-oxide-[protein] + [thioredoxin]-dithiol. The enzyme catalyses [thioredoxin]-disulfide + L-methionine + H2O = L-methionine (R)-S-oxide + [thioredoxin]-dithiol. Methionine-sulfoxide reductase that specifically reduces methionine (R)-sulfoxide back to methionine. While in many cases, methionine oxidation is the result of random oxidation following oxidative stress, methionine oxidation is also a post-translational modification that takes place on specific residue. Acts as a regulator of actin assembly by reducing methionine (R)-sulfoxide mediated by MICALs (mical1, mical2 or mical3) on actin, thereby promoting filament repolymerization. Plays a role in innate immunity by reducing oxidized actin, leading to actin repolymerization in macrophages. This chain is Methionine-R-sulfoxide reductase B1-A (msrb1), found in Danio rerio (Zebrafish).